The following is a 261-amino-acid chain: MGKYNLTALRVRQTALRQKEAGKTHQIPKWIDVVRDIPPAQVLVRNQQQQHQLVRQRLKTLPGASKPQVVFEVQEKRVKPKKASRMFLPTEIKYEEDLLRKEFFRDHPWELARPRVVLESTGKDYENYDWSRLQQPGKRLDGESVVQRQLWLLNNVPDMTKSTAYDIARREFYRLRLQEDIERRVAAEEAEATGATFGPTRLEIGMELENQEYERWKVWAKSEAQVQEQRAAAFTGAPEIPSTEDSLGLEEGVEEKQPQQA.

Positions E228–A261 are disordered.

The protein belongs to the mitochondrion-specific ribosomal protein mS23 family. In terms of assembly, component of the mitochondrial small ribosomal subunit.

Its subcellular location is the mitochondrion. The sequence is that of Small ribosomal subunit protein mS23 (rsm25) from Aspergillus oryzae (strain ATCC 42149 / RIB 40) (Yellow koji mold).